Reading from the N-terminus, the 144-residue chain is Large ribosomal subunit protein uL16 (144 aa).

It belongs to the universal ribosomal protein uL16 family. In terms of assembly, part of the 50S ribosomal subunit.

Functionally, binds 23S rRNA and is also seen to make contacts with the A and possibly P site tRNAs. The chain is Large ribosomal subunit protein uL16 from Latilactobacillus sakei subsp. sakei (strain 23K) (Lactobacillus sakei subsp. sakei).